The following is a 400-amino-acid chain: Mannitol-1-phosphate 5-dehydrogenase (400 aa).

12 to 23 lines the NAD(+) pocket; the sequence is AVHFGAGNIGRG. Residue Lys221 is part of the active site.

Belongs to the mannitol dehydrogenase family. As to quaternary structure, monomer.

The catalysed reaction is D-mannitol 1-phosphate + NAD(+) = beta-D-fructose 6-phosphate + NADH + H(+). Its function is as follows. Catalyzes the NAD(H)-dependent interconversion of D-fructose 6-phosphate and D-mannitol 1-phosphate in the mannitol metabolic pathway. This is Mannitol-1-phosphate 5-dehydrogenase from Pyricularia oryzae (strain Y34) (Rice blast fungus).